The primary structure comprises 393 residues: Prokineticin receptor 1 (393 aa).

The Extracellular segment spans residues 1-62 (METTVGTLGE…TNSRTFFAAK (62 aa)). N-linked (GlcNAc...) asparagine glycosylation is present at N11. The chain crosses the membrane as a helical span at residues 63–83 (IVIGMALVGIMLVCGIGNFIF). Topologically, residues 84 to 98 (ITALARYKKLRNLTN) are cytoplasmic. A helical transmembrane segment spans residues 99-119 (LLIANLAISDFLVAIVCCPFE). At 120–145 (MDYYVVRQLSWEHGHVLCASVNYLRT) the chain is on the extracellular side. C137 and C217 are joined by a disulfide. The chain crosses the membrane as a helical span at residues 146–166 (VSLYVSTNALLAIAIDRYLAI). The Cytoplasmic portion of the chain corresponds to 167–179 (VHPLRPRMKCQTA). Residues 180–200 (AGLIFLVWSVSILIAIPAAYF) form a helical membrane-spanning segment. The Extracellular segment spans residues 201 to 232 (TTETVLVIVESQEKIFCGQIWPVDQQFYYRSY). A helical transmembrane segment spans residues 233–253 (FLLVFGLEFVGPVIAMTLCYA). Over 254–282 (RVSRELWFKAVPGFQTEQIRRRLRCRRRT) the chain is Cytoplasmic. A helical membrane pass occupies residues 283–303 (VLGLVCVLSAYVLCWAPFYGF). Residues 304–322 (TIVRDFFPSVFVKEKHYLT) lie on the Extracellular side of the membrane. A helical membrane pass occupies residues 323–343 (AFYVVECIAMSNSMINTLCFV). Residues 344 to 393 (TVRNNTSKYLKRILRLQWRASPSGSKASADLDLRTTGIPATEEVDCIRLK) lie on the Cytoplasmic side of the membrane.

The protein belongs to the G-protein coupled receptor 1 family. As to expression, widely expressed in peripheral tissues with the highest level in the spleen and moderate levels in the adipose tissues, thymus, lung, kidney, testis, uterus and small intestine.

It is found in the cell membrane. Its function is as follows. Receptor for prokineticin 1. Exclusively coupled to the G(q) subclass of heteromeric G proteins. Activation leads to mobilization of calcium, stimulation of phosphoinositide turnover and activation of p44/p42 mitogen-activated protein kinase. May play a role during early pregnancy. This is Prokineticin receptor 1 (Prokr1) from Rattus norvegicus (Rat).